The chain runs to 776 residues: Protein translocase subunit SecA 2 (776 aa).

ATP-binding positions include Gln80, 98–102 (GEGKT), and Asp486.

It belongs to the SecA family. Monomer and homodimer. Part of the essential Sec protein translocation apparatus which comprises SecA, SecYEG and auxiliary proteins SecDF. Other proteins may also be involved.

Its subcellular location is the cell membrane. The protein localises to the cytoplasm. The catalysed reaction is ATP + H2O + cellular proteinSide 1 = ADP + phosphate + cellular proteinSide 2.. Its function is as follows. Part of the Sec protein translocase complex. Interacts with the SecYEG preprotein conducting channel. Has a central role in coupling the hydrolysis of ATP to the transfer of proteins into and across the cell membrane, serving as an ATP-driven molecular motor driving the stepwise translocation of polypeptide chains across the membrane. The polypeptide is Protein translocase subunit SecA 2 (Listeria monocytogenes serovar 1/2a (strain ATCC BAA-679 / EGD-e)).